A 114-amino-acid polypeptide reads, in one-letter code: U17-barytoxin-Tl1d (114 aa).

The first 20 residues, 1-20 (MKTIIVFLSLLVLATKFGDA), serve as a signal peptide directing secretion. Residues 21–74 (NEGVNQEQMKEVIQNEFREDFLNEMAAMSLLQQLEAIESTLLEKEADRNSRQKR) constitute a propeptide that is removed on maturation. Intrachain disulfides connect Cys75–Cys88, Cys82–Cys93, and Cys87–Cys108.

This sequence belongs to the neurotoxin 14 (magi-1) family. 03 (ICK-30-40) subfamily. In terms of tissue distribution, expressed by the venom gland.

Its subcellular location is the secreted. Ion channel inhibitor. This chain is U17-barytoxin-Tl1d, found in Trittame loki (Brush-footed trapdoor spider).